The chain runs to 142 residues: Large ribosomal subunit protein uL11 (142 aa).

Belongs to the universal ribosomal protein uL11 family. As to quaternary structure, part of the ribosomal stalk of the 50S ribosomal subunit. Interacts with L10 and the large rRNA to form the base of the stalk. L10 forms an elongated spine to which L12 dimers bind in a sequential fashion forming a multimeric L10(L12)X complex. Post-translationally, one or more lysine residues are methylated.

In terms of biological role, forms part of the ribosomal stalk which helps the ribosome interact with GTP-bound translation factors. This Xylella fastidiosa (strain 9a5c) protein is Large ribosomal subunit protein uL11.